A 305-amino-acid polypeptide reads, in one-letter code: Ribosomal protein L11 methyltransferase (305 aa).

Threonine 149, glycine 176, aspartate 198, and asparagine 240 together coordinate S-adenosyl-L-methionine.

This sequence belongs to the methyltransferase superfamily. PrmA family.

The protein localises to the cytoplasm. It catalyses the reaction L-lysyl-[protein] + 3 S-adenosyl-L-methionine = N(6),N(6),N(6)-trimethyl-L-lysyl-[protein] + 3 S-adenosyl-L-homocysteine + 3 H(+). Methylates ribosomal protein L11. The chain is Ribosomal protein L11 methyltransferase from Trichlorobacter lovleyi (strain ATCC BAA-1151 / DSM 17278 / SZ) (Geobacter lovleyi).